Consider the following 256-residue polypeptide: Triosephosphate isomerase (256 aa).

9–11 (NWK) serves as a coordination point for substrate. The active-site Electrophile is the His-96. Glu-168 functions as the Proton acceptor in the catalytic mechanism. Substrate is bound by residues Ser-213 and 234-235 (GG).

The protein belongs to the triosephosphate isomerase family. In terms of assembly, homodimer.

The protein resides in the cytoplasm. The enzyme catalyses D-glyceraldehyde 3-phosphate = dihydroxyacetone phosphate. The protein operates within carbohydrate biosynthesis; gluconeogenesis. Its pathway is carbohydrate degradation; glycolysis; D-glyceraldehyde 3-phosphate from glycerone phosphate: step 1/1. Involved in the gluconeogenesis. Catalyzes stereospecifically the conversion of dihydroxyacetone phosphate (DHAP) to D-glyceraldehyde-3-phosphate (G3P). The protein is Triosephosphate isomerase of Baumannia cicadellinicola subsp. Homalodisca coagulata.